A 215-amino-acid polypeptide reads, in one-letter code: Cytokinin riboside 5'-monophosphate phosphoribohydrolase LOG3 (215 aa).

Substrate contacts are provided by residues Glu84, 102–103 (RK), 119–125 (GYGTLEE), and Thr131.

Belongs to the LOG family. Expressed in roots and shoots. Detected in root procambium, lateral root primordia, vascular tissues of immature leaves, axillary buds, style and ovular funiculus.

The protein resides in the cytoplasm. The protein localises to the nucleus. It catalyses the reaction N(6)-(dimethylallyl)adenosine 5'-phosphate + H2O = N(6)-dimethylallyladenine + D-ribose 5-phosphate. The enzyme catalyses 9-ribosyl-trans-zeatin 5'-phosphate + H2O = trans-zeatin + D-ribose 5-phosphate. Functionally, cytokinin-activating enzyme working in the direct activation pathway. Phosphoribohydrolase that converts inactive cytokinin nucleotides to the biologically active free-base forms. In Arabidopsis thaliana (Mouse-ear cress), this protein is Cytokinin riboside 5'-monophosphate phosphoribohydrolase LOG3 (LOG3).